Reading from the N-terminus, the 50-residue chain is Small, acid-soluble spore protein P (50 aa).

A disordered region spans residues Met1 to Leu50. Basic residues predominate over residues Lys33–Leu50.

The protein belongs to the SspP family.

It is found in the spore core. This is Small, acid-soluble spore protein P from Oceanobacillus iheyensis (strain DSM 14371 / CIP 107618 / JCM 11309 / KCTC 3954 / HTE831).